Reading from the N-terminus, the 340-residue chain is Probable dual-specificity RNA methyltransferase RlmN (340 aa).

E90 functions as the Proton acceptor in the catalytic mechanism. The region spanning 97-325 (QVSRKTACLS…PVTRRYQRGN (229 aa)) is the Radical SAM core domain. C104 and C331 are joined by a disulfide. Residues C111, C115, and C118 each contribute to the [4Fe-4S] cluster site. S-adenosyl-L-methionine contacts are provided by residues 157 to 158 (GE), S189, 212 to 214 (SLT), and N288. C331 serves as the catalytic S-methylcysteine intermediate.

This sequence belongs to the radical SAM superfamily. RlmN family. The cofactor is [4Fe-4S] cluster.

It is found in the cytoplasm. The enzyme catalyses adenosine(2503) in 23S rRNA + 2 reduced [2Fe-2S]-[ferredoxin] + 2 S-adenosyl-L-methionine = 2-methyladenosine(2503) in 23S rRNA + 5'-deoxyadenosine + L-methionine + 2 oxidized [2Fe-2S]-[ferredoxin] + S-adenosyl-L-homocysteine. It catalyses the reaction adenosine(37) in tRNA + 2 reduced [2Fe-2S]-[ferredoxin] + 2 S-adenosyl-L-methionine = 2-methyladenosine(37) in tRNA + 5'-deoxyadenosine + L-methionine + 2 oxidized [2Fe-2S]-[ferredoxin] + S-adenosyl-L-homocysteine. Functionally, specifically methylates position 2 of adenine 2503 in 23S rRNA and position 2 of adenine 37 in tRNAs. The polypeptide is Probable dual-specificity RNA methyltransferase RlmN (Treponema pallidum (strain Nichols)).